The following is a 346-amino-acid chain: Heat-inducible transcription repressor HrcA (346 aa).

It belongs to the HrcA family.

Functionally, negative regulator of class I heat shock genes (grpE-dnaK-dnaJ and groELS operons). Prevents heat-shock induction of these operons. This Fructilactobacillus sanfranciscensis (Lactobacillus sanfranciscensis) protein is Heat-inducible transcription repressor HrcA.